The chain runs to 419 residues: Esterase FrsA (419 aa).

It belongs to the FrsA family.

The enzyme catalyses a carboxylic ester + H2O = an alcohol + a carboxylate + H(+). Functionally, catalyzes the hydrolysis of esters. In Photobacterium profundum (strain SS9), this protein is Esterase FrsA.